The chain runs to 658 residues: Cysteine-rich receptor-like protein kinase 14 (658 aa).

The signal sequence occupies residues 1–22 (MELKNLFPIFWFVLVGFAVVSA). 2 consecutive Gnk2-homologous domains span residues 23-125 (QECG…NSSF) and 131-240 (AEPH…LFPF). At 23 to 277 (QECGKTGFFV…ATKKGSITIS (255 aa)) the chain is on the extracellular side. Residues N51, N60, N102, N122, and N146 are each glycosylated (N-linked (GlcNAc...) asparagine). A helical transmembrane segment spans residues 278 to 298 (IGIVWAIIIPTVIVVFLVLLA). The Cytoplasmic portion of the chain corresponds to 299–658 (LGFVVYRRRK…DVTITDFEPR (360 aa)). Residues 337-614 (FSESNIIGRG…NMMLINNSYV (278 aa)) form the Protein kinase domain. ATP contacts are provided by residues 343–351 (IGRGGFGEV) and K364. Y409 carries the post-translational modification Phosphotyrosine. Catalysis depends on D461, which acts as the Proton acceptor. S465 bears the Phosphoserine mark. Residue T501 is modified to Phosphothreonine. Y509 is modified (phosphotyrosine).

The protein belongs to the protein kinase superfamily. Ser/Thr protein kinase family. CRK subfamily.

The protein resides in the membrane. It catalyses the reaction L-seryl-[protein] + ATP = O-phospho-L-seryl-[protein] + ADP + H(+). The catalysed reaction is L-threonyl-[protein] + ATP = O-phospho-L-threonyl-[protein] + ADP + H(+). This chain is Cysteine-rich receptor-like protein kinase 14 (CRK14), found in Arabidopsis thaliana (Mouse-ear cress).